A 581-amino-acid polypeptide reads, in one-letter code: Serine/threonine-protein kinase SSN3 (581 aa).

Residues 34–57 (LWSQQQQQQLLDTKGSASTSKSPM) are disordered. The segment covering 48 to 57 (GSASTSKSPM) has biased composition (polar residues). The Protein kinase domain occupies 85-475 (YEIIGYIAAG…AIDALEHEYF (391 aa)). ATP contacts are provided by residues 91–99 (IAAGTYGKV) and K195. Residue D298 is the Proton acceptor of the active site.

The protein belongs to the protein kinase superfamily. CMGC Ser/Thr protein kinase family. CDC2/CDKX subfamily. As to quaternary structure, component of the SRB8-11 complex, a regulatory module of the Mediator complex. It depends on Mg(2+) as a cofactor.

It localises to the nucleus. It catalyses the reaction L-seryl-[protein] + ATP = O-phospho-L-seryl-[protein] + ADP + H(+). It carries out the reaction L-threonyl-[protein] + ATP = O-phospho-L-threonyl-[protein] + ADP + H(+). The catalysed reaction is [DNA-directed RNA polymerase] + ATP = phospho-[DNA-directed RNA polymerase] + ADP + H(+). Functionally, component of the SRB8-11 complex. The SRB8-11 complex is a regulatory module of the Mediator complex which is itself involved in regulation of basal and activated RNA polymerase II-dependent transcription. The SRB8-11 complex may be involved in the transcriptional repression of a subset of genes regulated by Mediator. It may inhibit the association of the Mediator complex with RNA polymerase II to form the holoenzyme complex. The SRB8-11 complex phosphorylates the C-terminal domain (CTD) of the largest subunit of RNA polymerase II. In Eremothecium gossypii (strain ATCC 10895 / CBS 109.51 / FGSC 9923 / NRRL Y-1056) (Yeast), this protein is Serine/threonine-protein kinase SSN3 (SSN3).